A 719-amino-acid polypeptide reads, in one-letter code: Putative alpha-1,3-mannosyltransferase MNT4 (719 aa).

At 1 to 4 (MKFH) the chain is on the cytoplasmic side. A helical membrane pass occupies residues 5-22 (LKRYVIVTSILLSFFLLF). Over 23-719 (RRQFLPLTQR…KKLIEIWLQD (697 aa)) the chain is Lumenal. N-linked (GlcNAc...) asparagine glycans are attached at residues asparagine 148, asparagine 273, and asparagine 449.

Belongs to the MNN1/MNT family.

The protein resides in the golgi apparatus membrane. It functions in the pathway protein modification; protein glycosylation. Functionally, responsible for addition of the terminal mannose residues to the outer chain of core N-linked polysaccharides and to O-linked mannotriose. Implicated in late Golgi modifications. In Candida albicans (strain SC5314 / ATCC MYA-2876) (Yeast), this protein is Putative alpha-1,3-mannosyltransferase MNT4 (MNT4).